The primary structure comprises 131 residues: Large ribosomal subunit protein bL21 (131 aa).

The protein belongs to the bacterial ribosomal protein bL21 family. Part of the 50S ribosomal subunit. Contacts protein L20.

In terms of biological role, this protein binds to 23S rRNA in the presence of protein L20. The polypeptide is Large ribosomal subunit protein bL21 (Cereibacter sphaeroides (strain ATCC 17023 / DSM 158 / JCM 6121 / CCUG 31486 / LMG 2827 / NBRC 12203 / NCIMB 8253 / ATH 2.4.1.) (Rhodobacter sphaeroides)).